A 234-amino-acid chain; its full sequence is uncharacterized protein (234 aa).

3 helical membrane passes run 32–52 (GLRT…VSVL), 62–82 (IPAQ…LKEG), and 106–126 (QGLF…NIAL).

This sequence belongs to the MgtC/SapB family.

The protein localises to the cell membrane. This is an uncharacterized protein from Synechocystis sp. (strain ATCC 27184 / PCC 6803 / Kazusa).